We begin with the raw amino-acid sequence, 401 residues long: Dual-specificity RNA methyltransferase RlmN (401 aa).

Catalysis depends on Glu-114, which acts as the Proton acceptor. The Radical SAM core domain occupies 120–365 (DKTRGTLCVS…TMVRRTRGDD (246 aa)). Cys-127 and Cys-370 are joined by a disulfide. Residues Cys-134, Cys-138, and Cys-141 each coordinate [4Fe-4S] cluster. Residues 187–188 (GE), Ser-219, 241–243 (SLH), and Asn-327 each bind S-adenosyl-L-methionine. Catalysis depends on Cys-370, which acts as the S-methylcysteine intermediate.

This sequence belongs to the radical SAM superfamily. RlmN family. The cofactor is [4Fe-4S] cluster.

It localises to the cytoplasm. It catalyses the reaction adenosine(2503) in 23S rRNA + 2 reduced [2Fe-2S]-[ferredoxin] + 2 S-adenosyl-L-methionine = 2-methyladenosine(2503) in 23S rRNA + 5'-deoxyadenosine + L-methionine + 2 oxidized [2Fe-2S]-[ferredoxin] + S-adenosyl-L-homocysteine. The catalysed reaction is adenosine(37) in tRNA + 2 reduced [2Fe-2S]-[ferredoxin] + 2 S-adenosyl-L-methionine = 2-methyladenosine(37) in tRNA + 5'-deoxyadenosine + L-methionine + 2 oxidized [2Fe-2S]-[ferredoxin] + S-adenosyl-L-homocysteine. In terms of biological role, specifically methylates position 2 of adenine 2503 in 23S rRNA and position 2 of adenine 37 in tRNAs. m2A2503 modification seems to play a crucial role in the proofreading step occurring at the peptidyl transferase center and thus would serve to optimize ribosomal fidelity. This chain is Dual-specificity RNA methyltransferase RlmN, found in Stenotrophomonas maltophilia (strain R551-3).